Consider the following 561-residue polypeptide: MSKDNIRQYSAPVYDGIENAPARSMMRAVGFQDKDFNRPFIGIASTWANVTPCNMHIDGLAREAEHGVNQASGKGIIFNTITISDGISNGTEGMKYSLVSREIIADSIEAVIGCQGYDGVIAIGGCDKNMPGCIMGLARLNRPGLFIYGGTIQPGEGHTDMISVFEAVGQYAKGEINAIQVKQIEEVALPGPGSCGGMYTANTMASAIEALGMSLPGSSAQDAISEEKRQDCHRAGEAVMNLLRLDIRPRDIMTKAAFENAIKVVIALGGSTNAVLHLIAMAHTAEVKLDLDDFVRIGQETPVVADLRPSGKYLMSELIKIGGIQPLMKRMLERGMLDGSCLTVTGKTLAENLAEVEDYPADQQIILPFEQPVKKDSHLVILKGNLSPTGAVAKITGKEGLYFEGPARVFEGEEGAMRGILDGEVQEGEVVVIRGEGPKGGPGMREMLKPTSAIIGKGLGQSVALITDGRFSGGSHGFVIGHVTPEAYEGGPIGLVENGDKISINAETREITLHISNEEMSLRRAKWQKPEPKYKSGALAKFAKLAAGADKGAVTDLNLDV.

C53 contributes to the [2Fe-2S] cluster binding site. D85 lines the Mg(2+) pocket. C126 provides a ligand contact to [2Fe-2S] cluster. Positions 127 and 128 each coordinate Mg(2+). Residue K128 is modified to N6-carboxylysine. C195 is a binding site for [2Fe-2S] cluster. Residue E446 participates in Mg(2+) binding. Residue S472 is the Proton acceptor of the active site.

It belongs to the IlvD/Edd family. In terms of assembly, homodimer. The cofactor is [2Fe-2S] cluster. It depends on Mg(2+) as a cofactor.

It catalyses the reaction (2R)-2,3-dihydroxy-3-methylbutanoate = 3-methyl-2-oxobutanoate + H2O. It carries out the reaction (2R,3R)-2,3-dihydroxy-3-methylpentanoate = (S)-3-methyl-2-oxopentanoate + H2O. It functions in the pathway amino-acid biosynthesis; L-isoleucine biosynthesis; L-isoleucine from 2-oxobutanoate: step 3/4. The protein operates within amino-acid biosynthesis; L-valine biosynthesis; L-valine from pyruvate: step 3/4. Functions in the biosynthesis of branched-chain amino acids. Catalyzes the dehydration of (2R,3R)-2,3-dihydroxy-3-methylpentanoate (2,3-dihydroxy-3-methylvalerate) into 2-oxo-3-methylpentanoate (2-oxo-3-methylvalerate) and of (2R)-2,3-dihydroxy-3-methylbutanoate (2,3-dihydroxyisovalerate) into 2-oxo-3-methylbutanoate (2-oxoisovalerate), the penultimate precursor to L-isoleucine and L-valine, respectively. The polypeptide is Dihydroxy-acid dehydratase 2 (Acinetobacter baylyi (strain ATCC 33305 / BD413 / ADP1)).